The chain runs to 361 residues: DNA replication and repair protein RecF (361 aa).

Residue 30-37 (GDNAQGKT) participates in ATP binding.

This sequence belongs to the RecF family.

The protein localises to the cytoplasm. Functionally, the RecF protein is involved in DNA metabolism; it is required for DNA replication and normal SOS inducibility. RecF binds preferentially to single-stranded, linear DNA. It also seems to bind ATP. This Clostridium novyi (strain NT) protein is DNA replication and repair protein RecF.